The chain runs to 210 residues: Putative methyltransferase ECU09_1500 (210 aa).

This sequence belongs to the methyltransferase superfamily.

This chain is Putative methyltransferase ECU09_1500, found in Encephalitozoon cuniculi (strain GB-M1) (Microsporidian parasite).